The sequence spans 396 residues: Aspartate aminotransferase (396 aa).

The L-aspartate site is built by glycine 34, tryptophan 130, and asparagine 183. Lysine 246 bears the N6-(pyridoxal phosphate)lysine mark. Arginine 374 provides a ligand contact to L-aspartate.

Belongs to the class-I pyridoxal-phosphate-dependent aminotransferase family. In terms of assembly, homodimer. The cofactor is pyridoxal 5'-phosphate.

It localises to the cytoplasm. The catalysed reaction is L-aspartate + 2-oxoglutarate = oxaloacetate + L-glutamate. The sequence is that of Aspartate aminotransferase (aspC) from Salmonella typhi.